The sequence spans 406 residues: Synaptic vesicle membrane protein VAT-1 homolog (406 aa).

The segment at 1–57 (MSAEREAAEAATVAAATEAGAETGTGAGEGAPSQPPTVEVASDPQPPPAPEASASAS) is disordered. S2 carries the N-acetylserine modification. S2 bears the Phosphoserine mark. Residues 9–22 (EAATVAAATEAGAE) show a composition bias toward low complexity. 2 positions are modified to phosphoserine: S33 and S42.

The protein belongs to the zinc-containing alcohol dehydrogenase family. Quinone oxidoreductase subfamily.

Its subcellular location is the cytoplasm. It is found in the mitochondrion outer membrane. Its function is as follows. Plays a part in calcium-regulated keratinocyte activation in epidermal repair mechanisms. Has no effect on cell proliferation. Possesses ATPase activity. Negatively regulates mitochondrial fusion in cooperation with mitofusin proteins (MFN1-2). This is Synaptic vesicle membrane protein VAT-1 homolog (Vat1) from Mus musculus (Mouse).